A 538-amino-acid chain; its full sequence is Anti-bacteriophage protein A (538 aa).

In terms of assembly, interacts with AbpB.

Functionally, part of an antiviral system composed of AbpA and AbpB; when both are expressed from a plasmid they confer resistance to phages T2, T4, T7 and lambda but not RB32 or RB69. Resistance is temperature dependent, it can be seen at 30 degrees Celsius but not at 37 or 42 degrees Celsius. The system impairs phage but not bacterial DNA synthesis (shown for T4, T7 and lambda). Partially suppressed by mutations in T4 gene 41, a replicative helicase. The protein is Anti-bacteriophage protein A of Escherichia coli (strain K12).